The sequence spans 407 residues: Probable succinyl-diaminopimelate desuccinylase (407 aa).

His72 serves as a coordination point for Zn(2+). Residue Asp74 is part of the active site. Residue Asp105 coordinates Zn(2+). The active-site Proton acceptor is Glu139. Glu140, Glu165, and His378 together coordinate Zn(2+).

The protein belongs to the peptidase M20A family. Zn(2+) serves as cofactor. The cofactor is Co(2+).

It carries out the reaction N-succinyl-(2S,6S)-2,6-diaminopimelate + H2O = (2S,6S)-2,6-diaminopimelate + succinate. Its pathway is amino-acid biosynthesis; L-lysine biosynthesis via DAP pathway; LL-2,6-diaminopimelate from (S)-tetrahydrodipicolinate (succinylase route): step 3/3. This is Probable succinyl-diaminopimelate desuccinylase (dapE) from Staphylococcus aureus (strain N315).